A 515-amino-acid polypeptide reads, in one-letter code: Bifunctional purine biosynthesis protein PurH (515 aa).

Positions 1–145 (MTKRALISVS…KNHASVTVVV (145 aa)) constitute an MGS-like domain.

This sequence belongs to the PurH family.

It carries out the reaction (6R)-10-formyltetrahydrofolate + 5-amino-1-(5-phospho-beta-D-ribosyl)imidazole-4-carboxamide = 5-formamido-1-(5-phospho-D-ribosyl)imidazole-4-carboxamide + (6S)-5,6,7,8-tetrahydrofolate. The enzyme catalyses IMP + H2O = 5-formamido-1-(5-phospho-D-ribosyl)imidazole-4-carboxamide. It participates in purine metabolism; IMP biosynthesis via de novo pathway; 5-formamido-1-(5-phospho-D-ribosyl)imidazole-4-carboxamide from 5-amino-1-(5-phospho-D-ribosyl)imidazole-4-carboxamide (10-formyl THF route): step 1/1. Its pathway is purine metabolism; IMP biosynthesis via de novo pathway; IMP from 5-formamido-1-(5-phospho-D-ribosyl)imidazole-4-carboxamide: step 1/1. The polypeptide is Bifunctional purine biosynthesis protein PurH (Streptococcus equi subsp. zooepidemicus (strain H70)).